Reading from the N-terminus, the 354-residue chain is Sulfate/thiosulfate import ATP-binding protein CysA (354 aa).

Residues 3 to 237 form the ABC transporter domain; it reads IEVRGLSKRF…PATPFVYGFL (235 aa). An ATP-binding site is contributed by 35–42; it reads GPSGCGKT.

It belongs to the ABC transporter superfamily. Sulfate/tungstate importer (TC 3.A.1.6) family. In terms of assembly, the complex is composed of two ATP-binding proteins (CysA), two transmembrane proteins (CysT and CysW) and a solute-binding protein (CysP).

Its subcellular location is the cell inner membrane. It catalyses the reaction sulfate(out) + ATP + H2O = sulfate(in) + ADP + phosphate + H(+). It carries out the reaction thiosulfate(out) + ATP + H2O = thiosulfate(in) + ADP + phosphate + H(+). In terms of biological role, part of the ABC transporter complex CysAWTP involved in sulfate/thiosulfate import. Responsible for energy coupling to the transport system. The chain is Sulfate/thiosulfate import ATP-binding protein CysA from Bordetella bronchiseptica (strain ATCC BAA-588 / NCTC 13252 / RB50) (Alcaligenes bronchisepticus).